Consider the following 1793-residue polypeptide: Nucleoporin NUP145 (1793 aa).

GLFG repeat units follow at residues 50–53 (GLFG), 143–146 (GLFG), 255–258 (GLFG), 282–285 (GLFG), 292–295 (GLFG), 306–309 (GLFG), 336–339 (GLFG), 381–384 (GLFG), and 395–398 (GLFG). Disordered regions lie at residues 404–583 (GSAF…QQPQ), 740–859 (RTDL…EPGA), 999–1043 (GDDD…DDTF), and 1066–1097 (EVAN…PEDE). Residues 417-431 (NQSTGTSLFGNTQQK) are compositionally biased toward polar residues. GLFG repeat units follow at residues 434 to 437 (GLFG), 446 to 449 (GLFG), 470 to 473 (GLFG), 481 to 484 (GLFG), and 496 to 499 (GLFG). Positions 437-459 (GSTTTNTSGGLFGSTNTGTSTFG) are enriched in low complexity. Over residues 467 to 483 (TGGGLFGSKPAGTGGLF) the composition is skewed to gly residues. Positions 500 to 511 (NLNTNAQTQQPA) are enriched in polar residues. The stretch at 514-517 (GLFG) is one GLFG 15 repeat. Residues 518 to 535 (NLGQNNQAKPSLFGTSTT) show a composition bias toward low complexity. A GLFG 16 repeat occupies 539–542 (GLFG). 2 stretches are compositionally biased toward polar residues: residues 546–575 (AQQQ…FGSS) and 801–813 (STAN…NGAK). The span at 814 to 823 (SSPVAAASPP) shows a compositional bias: low complexity. The span at 826-840 (EQVKGKELAVVHEEE) shows a compositional bias: basic and acidic residues. A Peptidase S59 domain is found at 857-993 (PGAYWMSPTA…GVWAFSVEHF (137 aa)). The interval 859-992 (AYWMSPTADD…TGVWAFSVEH (134 aa)) is nucleoporin RNA-binding motif (NRM). A compositionally biased stretch (acidic residues) spans 999–1013 (GDDDDYDDDDYETEP). Positions 1025-1037 (TSPSISKSSTSPI) are enriched in low complexity.

Belongs to the nucleoporin GLFG family. In terms of assembly, component of the nuclear pore complex (NPC). NPC constitutes the exclusive means of nucleocytoplasmic transport. NPCs allow the passive diffusion of ions and small molecules and the active, nuclear transport receptor-mediated bidirectional transport of macromolecules such as proteins, RNAs, ribonucleoparticles (RNPs), and ribosomal subunits across the nuclear envelope. Due to its 8-fold rotational symmetry, all subunits are present with 8 copies or multiples thereof. NUP145 is autocatalytically cleaved in NUP145N and NUP145C.

Its subcellular location is the nucleus. The protein resides in the nuclear pore complex. The protein localises to the nucleus membrane. Functions as a component of the nuclear pore complex (NPC). NPC components, collectively referred to as nucleoporins (NUPs), can play the role of both NPC structural components and of docking or interaction partners for transiently associated nuclear transport factors. Active directional transport is assured by both, a Phe-Gly (FG) repeat affinity gradient for these transport factors across the NPC and a transport cofactor concentration gradient across the nuclear envelope. NUP145 is autocatalytically cleaved in vivo in 2 polypeptides which assume different functions in the NPC. NUP145N as one of the FG repeat nucleoporins participates in karyopherin interactions and contains part of the autocatalytic cleavage activity. NUP145C as part of the NUP84 complex is involved in nuclear poly(A)+ RNA and tRNA export. In Chaetomium thermophilum (strain DSM 1495 / CBS 144.50 / IMI 039719) (Thermochaetoides thermophila), this protein is Nucleoporin NUP145 (NUP145).